A 394-amino-acid polypeptide reads, in one-letter code: MLKQIQKFLKLEAASGILLLVSALLAMIFANTDLNQLYFSFLQTEVAIKFGAFSIDKPLLMWVNDGFMAVFFILVGMEVKRELFEGSLSSYQKAIFPAVAALGGMIIPALVYWFINQNSPEYQQGWAIPMATDIAFALGIVALLSKQVPPALKVFLLALAIIDDLGAIIVIALFFSHEMSMQALTIASIAIVILVAMNRYKVTGLINYAIIGTILWASVLKSGVHATLAGVIIGFCIPLRGKNGEAPLHHLEHALAPWCSFAILPLFAFSNAGVSLEGMSLDKLASPLPLGVALGLIIGKPVGVFLFSYVAVLLGIAKVPEGINLKQIFAIAVLCGIGFTMSMFIAGLAFGEEDASESVLALARLGILMGTFVAAIIGYFLLKITTKPSLMKAA.

Helical transmembrane passes span 11–31, 59–79, 95–115, 125–145, 155–175, 177–197, 203–220, 254–274, 296–316, 328–348, and 365–385; these read LEAA…IFAN, LLMW…GMEV, IFPA…YWFI, GWAI…ALLS, FLLA…ALFF, HEMS…LVAM, TGLI…ASVL, ALAP…NAGV, LIIG…LLGI, IFAI…IAGL, and LGIL…LKIT.

It belongs to the NhaA Na(+)/H(+) (TC 2.A.33) antiporter family.

It is found in the cell inner membrane. The enzyme catalyses Na(+)(in) + 2 H(+)(out) = Na(+)(out) + 2 H(+)(in). Na(+)/H(+) antiporter that extrudes sodium in exchange for external protons. The polypeptide is Na(+)/H(+) antiporter NhaA (Actinobacillus pleuropneumoniae serotype 3 (strain JL03)).